The following is an 84-amino-acid chain: Kappa-conotoxin-like Im11.3 (84 aa).

Residues 1-26 form the signal peptide; the sequence is MMFRLTSVSCFLLVIACLNLFQVVLT. 4 cysteine pairs are disulfide-bonded: C29–C43, C36–C48, C42–C51, and C47–C64. The propeptide occupies 71-84; that stretch reads LRPSHPLFLLLPAR.

It belongs to the conotoxin I2 superfamily. Expressed by the venom duct.

The protein localises to the secreted. Its function is as follows. Inhibits the vertebrate voltage-gated potassium channels Kv1.1/KCNA1 and Kv1.3/KCNA3. The protein is Kappa-conotoxin-like Im11.3 of Conus imperialis (Imperial cone).